A 126-amino-acid polypeptide reads, in one-letter code: MFRTLLKSKIHRASVTHCELNYEGSCAIDEDLLDAANLGENEQVHIWNINNGERFITYAIRAERGSRIISVNGSAARRAAVGDLVIIAAFAQVHEEYVAGFRPKLVFVDPDNRIKEERSTIPVQMP.

The active-site Schiff-base intermediate with substrate; via pyruvic acid is the Ser-25. At Ser-25 the chain carries Pyruvic acid (Ser). Thr-57 provides a ligand contact to substrate. The Proton donor role is filled by Tyr-58. 73–75 (GSA) lines the substrate pocket.

Belongs to the PanD family. Heterooctamer of four alpha and four beta subunits. Pyruvate is required as a cofactor. Post-translationally, is synthesized initially as an inactive proenzyme, which is activated by self-cleavage at a specific serine bond to produce a beta-subunit with a hydroxyl group at its C-terminus and an alpha-subunit with a pyruvoyl group at its N-terminus.

The protein localises to the cytoplasm. The enzyme catalyses L-aspartate + H(+) = beta-alanine + CO2. The protein operates within cofactor biosynthesis; (R)-pantothenate biosynthesis; beta-alanine from L-aspartate: step 1/1. Its function is as follows. Catalyzes the pyruvoyl-dependent decarboxylation of aspartate to produce beta-alanine. The protein is Aspartate 1-decarboxylase 1 of Polaromonas sp. (strain JS666 / ATCC BAA-500).